The following is a 616-amino-acid chain: Dihydroxy-acid dehydratase (616 aa).

Position 81 (aspartate 81) interacts with Mg(2+). Cysteine 122 contacts [2Fe-2S] cluster. Mg(2+)-binding residues include aspartate 123 and lysine 124. Lysine 124 carries the N6-carboxylysine modification. Cysteine 195 contacts [2Fe-2S] cluster. Mg(2+) is bound at residue glutamate 491. Serine 517 functions as the Proton acceptor in the catalytic mechanism.

This sequence belongs to the IlvD/Edd family. As to quaternary structure, homodimer. It depends on [2Fe-2S] cluster as a cofactor. Requires Mg(2+) as cofactor.

It catalyses the reaction (2R)-2,3-dihydroxy-3-methylbutanoate = 3-methyl-2-oxobutanoate + H2O. It carries out the reaction (2R,3R)-2,3-dihydroxy-3-methylpentanoate = (S)-3-methyl-2-oxopentanoate + H2O. Its pathway is amino-acid biosynthesis; L-isoleucine biosynthesis; L-isoleucine from 2-oxobutanoate: step 3/4. The protein operates within amino-acid biosynthesis; L-valine biosynthesis; L-valine from pyruvate: step 3/4. Functions in the biosynthesis of branched-chain amino acids. Catalyzes the dehydration of (2R,3R)-2,3-dihydroxy-3-methylpentanoate (2,3-dihydroxy-3-methylvalerate) into 2-oxo-3-methylpentanoate (2-oxo-3-methylvalerate) and of (2R)-2,3-dihydroxy-3-methylbutanoate (2,3-dihydroxyisovalerate) into 2-oxo-3-methylbutanoate (2-oxoisovalerate), the penultimate precursor to L-isoleucine and L-valine, respectively. The polypeptide is Dihydroxy-acid dehydratase (Escherichia coli (strain SMS-3-5 / SECEC)).